A 282-amino-acid chain; its full sequence is 4-diphosphocytidyl-2-C-methyl-D-erythritol kinase (282 aa).

Lys15 is an active-site residue. 98-108 (PMGGGVGGGSS) is a binding site for ATP. The active site involves Asp140.

Belongs to the GHMP kinase family. IspE subfamily.

The catalysed reaction is 4-CDP-2-C-methyl-D-erythritol + ATP = 4-CDP-2-C-methyl-D-erythritol 2-phosphate + ADP + H(+). The protein operates within isoprenoid biosynthesis; isopentenyl diphosphate biosynthesis via DXP pathway; isopentenyl diphosphate from 1-deoxy-D-xylulose 5-phosphate: step 3/6. Functionally, catalyzes the phosphorylation of the position 2 hydroxy group of 4-diphosphocytidyl-2C-methyl-D-erythritol. The chain is 4-diphosphocytidyl-2-C-methyl-D-erythritol kinase from Azoarcus sp. (strain BH72).